We begin with the raw amino-acid sequence, 80 residues long: Metallothionein-like protein type 2, MT2-28 (80 aa).

This sequence belongs to the metallothionein superfamily. Type 15 family.

In terms of biological role, metallothioneins have a high content of cysteine residues that bind various heavy metals. The protein is Metallothionein-like protein type 2, MT2-28 of Brassica juncea (Indian mustard).